Here is a 307-residue protein sequence, read N- to C-terminus: Taste receptor type 2 member 10 (307 aa).

At 1-6 the chain is on the extracellular side; that stretch reads MLRVVE. A helical transmembrane segment spans residues 7–27; that stretch reads GIFIFVVISESVFGVLGNGFI. At 28-42 the chain is on the cytoplasmic side; that stretch reads GLVNCIDCAKNKLST. A helical transmembrane segment spans residues 43 to 63; sequence IGFILTGLAISRIFLIWIIIT. The Extracellular portion of the chain corresponds to 64–100; sequence DGFIQIFSPNIYASSNLIEYISYFWVIGNQSSMWFAT. The chain crosses the membrane as a helical span at residues 101–121; sequence SLSIFYFLKIANFSNYIFLWL. Residues 122–126 lie on the Cytoplasmic side of the membrane; that stretch reads KSRTN. The chain crosses the membrane as a helical span at residues 127 to 147; it reads MVLPFMIVFLLISSLLNFAYI. The Extracellular portion of the chain corresponds to 148–179; that stretch reads AKILNDYKMKNDTVWDLNMYKSEYFIKQILLN. Asn-158 carries an N-linked (GlcNAc...) asparagine glycan. A helical membrane pass occupies residues 180–200; sequence LGVIFFFTLSLITCVLLIISL. The Cytoplasmic segment spans residues 201–227; sequence WRHNRQMQSNVTGLRDSNTEAHVKAMK. The helical transmembrane segment at 228–248 threads the bilayer; it reads VLISFIILFILYFIGMAIEIS. Residues 249 to 257 lie on the Extracellular side of the membrane; the sequence is YFTVRENKL. The helical transmembrane segment at 258–278 threads the bilayer; the sequence is LLMFGMTTTAIYPWGHSFILI. At 279–307 the chain is on the cytoplasmic side; sequence LGNSKLKQASLRVLQQLKCCEKRKNLRVT.

This sequence belongs to the G-protein coupled receptor T2R family.

Its subcellular location is the membrane. In terms of biological role, receptor that may play a role in the perception of bitterness and is gustducin-linked. May play a role in sensing the chemical composition of the gastrointestinal content. The activity of this receptor may stimulate alpha gustducin, mediate PLC-beta-2 activation and lead to the gating of TRPM5. This Pan paniscus (Pygmy chimpanzee) protein is Taste receptor type 2 member 10 (TAS2R10).